Consider the following 342-residue polypeptide: Prenyl transferase penC (342 aa).

The helical transmembrane segment at 17 to 37 (LSYLTLTVGALALVVVLYISI) threads the bilayer. An isopentenyl diphosphate-binding site is contributed by His-110. Mg(2+) is bound by residues Asp-117 and Asp-121. Arg-126 serves as a coordination point for dimethylallyl diphosphate. Residue Asn-154 is glycosylated (N-linked (GlcNAc...) asparagine). Lys-210 contacts dimethylallyl diphosphate.

It belongs to the FPP/GGPP synthase family.

It is found in the membrane. The protein operates within secondary metabolite biosynthesis. In terms of biological role, prenyl transferase; part of the gene cluster that mediates the biosynthesis of the indole diterpenes penitrems. The geranylgeranyl diphosphate (GGPP) synthase penG catalyzes the first step in penitrem biosynthesis via conversion of farnesyl pyrophosphate and isopentyl pyrophosphate into geranylgeranyl pyrophosphate (GGPP). Condensation of indole-3-glycerol phosphate with GGPP by the prenyl transferase penC then forms 3-geranylgeranylindole (3-GGI). Epoxidation by the FAD-dependent monooxygenase penM leads to a epoxidized-GGI that is substrate of the terpene cyclase penB for cyclization to yield paspaline. Paspaline is subsequently converted to 13-desoxypaxilline by the cytochrome P450 monooxygenase penP, the latter being then converted to paxilline by the cytochrome P450 monooxygenase penQ. Paxilline is converted to beta-paxitriol via C-10 ketoreduction by the short-chain dehydrogenase PC-15 which can be monoprenylated at the C-20 by the indole diterpene prenyltransferase penD. A two-step elimination (acetylation and elimination) process performed by the O-acetyltransferase PC-16 and the P.simplicissimum ptmI-ortholog not yet identified in P.crustosum, leads to the production of the prenylated form of penijanthine. The FAD-linked oxidoreductase ptmO then converts the prenylated form of penijanthine into PC-M5 which is in turn transformed into PC-M4 by the aromatic dimethylallyltransferase PC-22. A series of oxidation steps involving 4 cytochrome P450 monooxygenases (PC-21, PC-05, PC-23, PC-20) and a FAD-dependent monooxygenase (PC-14) are required for the transformation of PC-M4 to penitrems A and E. Synthesis of these final products is proposed to proceed via penitrems D and C (PC-21, PC-05, PC-14) and penitrems B and F (PC-21, PC-05, PC-14, PC-23). The protein is Prenyl transferase penC of Penicillium crustosum (Blue mold fungus).